We begin with the raw amino-acid sequence, 155 residues long: Transcriptional repressor NrdR (155 aa).

Over residues 1–11 (MECPNCHQNAS) the composition is skewed to polar residues. Residues 1 to 22 (MECPNCHQNASRVIDSRPSDEN) are disordered. The segment at 3–34 (CPNCHQNASRVIDSRPSDENRAIRRRRECENC) is a zinc-finger region. One can recognise an ATP-cone domain in the interval 49–139 (LLVIKNDGTR…IYREFKDMSS (91 aa)).

This sequence belongs to the NrdR family. Zn(2+) is required as a cofactor.

Its function is as follows. Negatively regulates transcription of bacterial ribonucleotide reductase nrd genes and operons by binding to NrdR-boxes. This chain is Transcriptional repressor NrdR, found in Lactobacillus helveticus (strain DPC 4571).